A 63-amino-acid chain; its full sequence is Large ribosomal subunit protein bL28 (63 aa).

This sequence belongs to the bacterial ribosomal protein bL28 family.

The chain is Large ribosomal subunit protein bL28 from Petrotoga mobilis (strain DSM 10674 / SJ95).